A 1036-amino-acid chain; its full sequence is Beta-galactosidase (1036 aa).

Residues Asn97 and Asp197 each contribute to the substrate site. Asp197 provides a ligand contact to Na(+). The Mg(2+) site is built by Glu411, His413, and Glu456. Residues Glu456 and 532 to 535 (EYAH) contribute to the substrate site. Glu456 serves as the catalytic Proton donor. Glu532 acts as the Nucleophile in catalysis. Asn592 provides a ligand contact to Mg(2+). Residues Phe596 and Asp599 each coordinate Na(+). 2 residues coordinate substrate: Asp599 and Trp1006.

Belongs to the glycosyl hydrolase 2 family. As to quaternary structure, homotetramer. Mg(2+) is required as a cofactor. It depends on Na(+) as a cofactor.

The catalysed reaction is Hydrolysis of terminal non-reducing beta-D-galactose residues in beta-D-galactosides.. This chain is Beta-galactosidase, found in Leuconostoc mesenteroides subsp. mesenteroides (strain ATCC 8293 / DSM 20343 / BCRC 11652 / CCM 1803 / JCM 6124 / NCDO 523 / NBRC 100496 / NCIMB 8023 / NCTC 12954 / NRRL B-1118 / 37Y).